Reading from the N-terminus, the 670-residue chain is Receptor for retinol uptake stra6 (670 aa).

Residues 1-38 lie on the Extracellular side of the membrane; sequence MSAETVNNYDYSDWYENAAPTKAPVEVIPPCDPTADEG. The chain crosses the membrane as a helical span at residues 39–59; it reads LFHICIAAISLVVMLVLAILA. Topologically, residues 60–87 are cytoplasmic; sequence RRQKLSDNQRGLTGLLSPVNFLDHTQHK. A helical transmembrane segment spans residues 88 to 108; that stretch reads GLAVAVYGVLFCKLVGMVLSH. The Extracellular portion of the chain corresponds to 109-121; the sequence is HPLPFTKEVANKE. A helical transmembrane segment spans residues 122 to 142; it reads FWMILALLYYPALYYPLLACG. Over 143–145 the chain is Cytoplasmic; it reads TLH. The chain crosses the membrane as a helical span at residues 146 to 166; sequence NKVGYVLGSLLSWTHFGILVW. Residues 167-182 are Extracellular-facing; it reads QKVDCPKTPQIYKYYA. A helical transmembrane segment spans residues 183–203; that stretch reads LFGSLPQIACLAFLSFQYPLL. Topologically, residues 204 to 274 are cytoplasmic; sequence LFKGLQNTET…PEDVFRFPLK (71 aa). A helical membrane pass occupies residues 275 to 295; the sequence is LAISVVVAFIALYQMALLLIS. The Extracellular portion of the chain corresponds to 296–346; that stretch reads GVLPTLHIVRRGVDENIAFLLAGFNIILSNDRQEVVRIVVYYLWCVEICYV. Residues 347–367 form a helical membrane-spanning segment; it reads SAVTLSCLVNLLMLMRSMVLH. Topologically, residues 368–401 are cytoplasmic; the sequence is RSNLKGLYRGDSLNVFNCHRSIRPSRPALVCWMG. Residues 402-422 form a helical membrane-spanning segment; it reads FTSYQAAFLCLGMAIQTLVFF. At 423–452 the chain is on the extracellular side; sequence ICILFAVFLIIIPILWGTNLMLFHIIGNLW. Residues 453–473 traverse the membrane as a helical segment; that stretch reads PFWLTLVLAALIQHVASRFLF. Residues 474–488 are Cytoplasmic-facing; that stretch reads IRKDGGTRDLNNRGS. An intramembrane region (helical) is located at residues 489 to 526; the sequence is LFLLSYILFLVNVMIGVVLGIWRVVITALFNIVHLGRL. The Cytoplasmic segment spans residues 527-670; it reads DISLLNRNVE…KEAESAAASN (144 aa). Positions 600 to 626 are interaction with calmodulin; the sequence is VSNAKRARAHWQLLYTLVNNPSLVGSR. Positions 640 to 670 are disordered; that stretch reads GALSRTSKEGSKKDGSVNEPSKEAESAAASN. The span at 645 to 664 shows a compositional bias: basic and acidic residues; sequence TSKEGSKKDGSVNEPSKEAE.

Homodimer. Interacts (via C-terminus) with calmodulin.

Its subcellular location is the cell membrane. Retinol transporter. Accepts retinol from the extracellular retinol-binding protein rbp4, mediates retinol transport across the cell membrane, and then transmits retinol to the cytoplasmic retinol-binding protein rbp1. Required for normal vitamin A homeostasis. The sequence is that of Receptor for retinol uptake stra6 from Danio rerio (Zebrafish).